A 205-amino-acid chain; its full sequence is Pectinesterase inhibitor 3 (205 aa).

An N-terminal signal peptide occupies residues 1–25 (MAPTQNLFLVAIAFAVIFTASTVHG). 2 cysteine pairs are disulfide-bonded: C38/C47 and C104/C156.

It belongs to the PMEI family. As to expression, expressed in apical meristem.

It localises to the secreted. The protein localises to the extracellular space. Its subcellular location is the apoplast. Functionally, pectin methylesterase (PME) inhibitor that can target PMEs (e.g. PME2 and PME3) in a pH-dependent manner, mainly in slightly acidic conditions (pH 6.3 and 5.0) but not at pH 7.5; this processus relies on changes in the protonation of amino acids involved in intermolecular and intramolecular interactions. Regulates de-methylesterification of pectins in the apical meristem and affects primordia formation and phyllotactic patterning. In Arabidopsis thaliana (Mouse-ear cress), this protein is Pectinesterase inhibitor 3.